The sequence spans 177 residues: MTSSAMDNNESKVLEMVYDATILPDCSGMDPSIIDCINRHINMRIQRSYSSNIIAILDRFLMMNKDELNNTQCHIIKEFMTYEQMAIDYYGGYVNAILYQIRKRPNQHHTIDLFKRIKRTRYDTFKVNPVEFVKKVIGFVSILNKYKPIYSYVLYENVLYDELKCFIDYVETKYFQN.

This sequence belongs to the poxviridae OPG036 family.

The protein localises to the host nucleus. In terms of biological role, plays a role in the inhibition of host innate immune response. Within the host nucleus, inhibits activation of interferon-beta promoter by inhibiting IRF3 activation. The sequence is that of Protein OPG036 (OPG036) from Monkeypox virus.